A 465-amino-acid chain; its full sequence is Glutathione reductase (465 aa).

Ser16 and Gly17 together coordinate FAD. Ser16 is a binding site for glutathione. Residue Arg23 participates in glutathione binding. FAD contacts are provided by Glu42, Thr49, Cys50, and Lys58. Cys50 and Cys55 are joined by a disulfide. Position 108 (Tyr108) interacts with glutathione. Gly124 serves as a coordination point for FAD. Residues Ala187, Ile190, Glu193, Arg210, Arg216, and Gly276 each coordinate NADP(+). Asp318 is an FAD binding site. Position 324 (Leu324) interacts with NADP(+). Thr326 contributes to the FAD binding site. Glutathione is bound at residue Arg334. Val357 is a binding site for NADP(+). Position 454 (His454) interacts with FAD. The active-site Proton acceptor is the His454.

Belongs to the class-I pyridine nucleotide-disulfide oxidoreductase family. It depends on FAD as a cofactor.

The protein resides in the cytoplasm. The catalysed reaction is 2 glutathione + NADP(+) = glutathione disulfide + NADPH + H(+). In terms of biological role, catalyzes the reduction of glutathione disulfide (GSSG) to reduced glutathione (GSH). Constitutes the major mechanism to maintain a high GSH:GSSG ratio in the cytosol. The amount of GSH may affect the determination of cell fate. This Dictyostelium discoideum (Social amoeba) protein is Glutathione reductase (gsr).